Here is a 517-residue protein sequence, read N- to C-terminus: Crotonobetaine/carnitine--CoA ligase (517 aa).

Belongs to the ATP-dependent AMP-binding enzyme family.

The catalysed reaction is 4-(trimethylamino)butanoate + ATP + CoA = 4-(trimethylamino)butanoyl-CoA + AMP + diphosphate. It catalyses the reaction crotonobetaine + ATP + CoA = crotonobetainyl-CoA + AMP + diphosphate. The enzyme catalyses (R)-carnitine + ATP + CoA = (R)-carnitinyl-CoA + AMP + diphosphate. The protein operates within amine and polyamine metabolism; carnitine metabolism. In terms of biological role, catalyzes the transfer of CoA to carnitine, generating the initial carnitinyl-CoA needed for the CaiB reaction cycle. Also has activity toward crotonobetaine and gamma-butyrobetaine. The sequence is that of Crotonobetaine/carnitine--CoA ligase from Shigella flexneri.